A 130-amino-acid chain; its full sequence is Iron-sulfur cluster insertion protein ErpA (130 aa).

Positions 46, 116, and 118 each coordinate iron-sulfur cluster.

The protein belongs to the HesB/IscA family. As to quaternary structure, homodimer. The cofactor is iron-sulfur cluster.

Its function is as follows. Required for insertion of 4Fe-4S clusters for at least IspG. This is Iron-sulfur cluster insertion protein ErpA from Legionella pneumophila subsp. pneumophila (strain Philadelphia 1 / ATCC 33152 / DSM 7513).